Here is a 241-residue protein sequence, read N- to C-terminus: Carboxy-S-adenosyl-L-methionine synthase 1 (241 aa).

Residues Y37, 61 to 63, N131, and R198 each bind S-adenosyl-L-methionine; that span reads GCS.

Belongs to the class I-like SAM-binding methyltransferase superfamily. Cx-SAM synthase family. As to quaternary structure, homodimer.

The enzyme catalyses prephenate + S-adenosyl-L-methionine = carboxy-S-adenosyl-L-methionine + 3-phenylpyruvate + H2O. Functionally, catalyzes the conversion of S-adenosyl-L-methionine (SAM) to carboxy-S-adenosyl-L-methionine (Cx-SAM). The polypeptide is Carboxy-S-adenosyl-L-methionine synthase 1 (Yersinia pseudotuberculosis serotype IB (strain PB1/+)).